Consider the following 125-residue polypeptide: Flagellar protein FliT (125 aa).

Residues 1-50 (MDNKMDLLSAYQRILSLSEQMLNLAKNEKWDELVDMEITYLKAVEVISHS) form a required for homodimerization region. The fliD binding stretch occupies residues 60-98 (LQQKMTNILQIILDNENEIKKLLQKRLDELSKLIKQASQ).

The protein belongs to the FliT family. In terms of assembly, homodimer. Interacts with FliD and FlhC.

The protein resides in the cytoplasm. It is found in the cytosol. Functionally, dual-function protein that regulates the transcription of class 2 flagellar operons and that also acts as an export chaperone for the filament-capping protein FliD. As a transcriptional regulator, acts as an anti-FlhDC factor; it directly binds FlhC, thus inhibiting the binding of the FlhC/FlhD complex to class 2 promoters, resulting in decreased expression of class 2 flagellar operons. As a chaperone, effects FliD transition to the membrane by preventing its premature polymerization, and by directing it to the export apparatus. This is Flagellar protein FliT from Photorhabdus laumondii subsp. laumondii (strain DSM 15139 / CIP 105565 / TT01) (Photorhabdus luminescens subsp. laumondii).